The sequence spans 312 residues: Ribonuclease Z (312 aa).

Residues His-62, His-64, Asp-66, His-67, His-139, Asp-210, and His-268 each contribute to the Zn(2+) site. Residue Asp-66 is the Proton acceptor of the active site.

This sequence belongs to the RNase Z family. In terms of assembly, homodimer. Requires Zn(2+) as cofactor.

The catalysed reaction is Endonucleolytic cleavage of RNA, removing extra 3' nucleotides from tRNA precursor, generating 3' termini of tRNAs. A 3'-hydroxy group is left at the tRNA terminus and a 5'-phosphoryl group is left at the trailer molecule.. Its function is as follows. Zinc phosphodiesterase, which displays some tRNA 3'-processing endonuclease activity. Probably involved in tRNA maturation, by removing a 3'-trailer from precursor tRNA. In Crocosphaera subtropica (strain ATCC 51142 / BH68) (Cyanothece sp. (strain ATCC 51142)), this protein is Ribonuclease Z.